Consider the following 309-residue polypeptide: Olfactory receptor 10J5 (309 aa).

The Extracellular segment spans residues 1 to 27 (MQRNNFTEVIEFVFLGFSSFGKHQITL). The chain crosses the membrane as a helical span at residues 28 to 48 (FVVFLTIYILTLAGNIIIVTI). Topologically, residues 49–57 (THIDHHLHT) are cytoplasmic. A helical membrane pass occupies residues 58-78 (PMYFFLSMLASSETVYTLVIV). The Extracellular segment spans residues 79-84 (PRMLSS). The chain crosses the membrane as a helical span at residues 85–105 (LIFYNLPISLAGCATQMFFFV). A disulfide bond links Cys-97 and Cys-178. Over 106–131 (TLATNNCFLLTAMGYDRYVAICNPLR) the chain is Cytoplasmic. Residues 132–152 (YTIIMSKGMCALLVCGSLGTG) form a helical membrane-spanning segment. Over 153 to 203 (LVMAVLHVPAMFHLPFCGTVVEHFFCDIYPVMKLSCVDTTVNEIINYGVSS) the chain is Extracellular. Residues 204 to 224 (FVILVPIGLIFISYVLIVSSI) form a helical membrane-spanning segment. Residues 225-235 (LKIVSTEGQKK) lie on the Cytoplasmic side of the membrane. Residues 236–256 (AFATCASHLTVVIVHYGCASI) form a helical membrane-spanning segment. Topologically, residues 257–270 (AYLKPKSESSVEKD) are extracellular. The helical transmembrane segment at 271–291 (LLLSVTYTIITPLLNPVVYSL) threads the bilayer. Residues 292 to 309 (RNKEVKDALCRAVGRNTS) lie on the Cytoplasmic side of the membrane.

It belongs to the G-protein coupled receptor 1 family. As to expression, expressed in the olfactory epithelium as well as in the testis. Expressed in round spermatids during stages VI-VIII of spermatogenesis.

It is found in the cell membrane. In terms of biological role, olfactory receptor. Activated by the synthetic floral odorant, lyral, and by alpha-cedrene, a sesquiterpene constituent of cedarwood oil. Its activation increases intracellular Ca(2+). Acts as a key regulator of myogenesis through its actions on cell migration and adhesion by activating the Ca(2+)-dependent AKT signal transduction pathway. Also acts as a regulator of angiogenesis. Moreover, plays a role in the regulation of lipid accumulation in hepatocytes via the cAMP-PKA pathway. Involved in sperm chemotaxis and motility. This is Olfactory receptor 10J5 from Mus musculus (Mouse).